Here is a 45-residue protein sequence, read N- to C-terminus: Endo-1,4-beta-xylanase Xyn10A (45 aa).

The protein belongs to the glycosyl hydrolase 10 (cellulase F) family.

Its subcellular location is the secreted. The protein localises to the extracellular space. The enzyme catalyses Endohydrolysis of (1-&gt;4)-beta-D-xylosidic linkages in xylans.. The catalysed reaction is Endohydrolysis of (1-&gt;4)-beta-D-glucosidic linkages in cellulose, lichenin and cereal beta-D-glucans.. The protein operates within glycan degradation; xylan degradation. Has xylanase, avicelase and cellobiohydrolase activity. This is Endo-1,4-beta-xylanase Xyn10A from Gloeophyllum trabeum (Brown rot fungus).